Reading from the N-terminus, the 327-residue chain is Thiosulfate dehydrogenase (327 aa).

The signal sequence occupies residues Met-1–Gly-26. Over residues Asn-66–Ala-78 the composition is skewed to low complexity. Positions Asn-66–Pro-93 are disordered. Cytochrome c domains lie at Ala-99 to Ser-196 and Pro-219 to Pro-305. Heme c is bound by residues Cys-125, Cys-128, His-129, Cys-232, Cys-235, and His-236.

Monomer. Binds 2 heme c groups covalently per subunit.

It is found in the periplasm. The catalysed reaction is 2 thiosulfate + 2 Fe(III)-[cytochrome c] = tetrathionate + 2 Fe(II)-[cytochrome c] + 2 H(+). In terms of biological role, catalyzes the oxidation of 2 molecules of thiosulfate to tetrathionate. This Psychrobacter arcticus (strain DSM 17307 / VKM B-2377 / 273-4) protein is Thiosulfate dehydrogenase (tsdA).